A 407-amino-acid chain; its full sequence is Lysosomal phospholipase A and acyltransferase (407 aa).

The first 29 residues, 1-29 (MGCLCLYRSTLLTGGLLFLLMLADPAFPA), serve as a signal peptide directing secretion. Asp41 is a substrate binding site. An intrachain disulfide couples Cys60 to Cys84. Residue Asn94 is glycosylated (N-linked (GlcNAc...) asparagine). Residue Ser193 is the Acyl-ester intermediate of the active site. Residue Ser193 participates in Zn(2+) binding. Met194 is a binding site for substrate. An N-linked (GlcNAc...) asparagine glycan is attached at Asn284. Catalysis depends on charge relay system residues Asp355 and His387. His387 provides a ligand contact to Zn(2+). N-linked (GlcNAc...) asparagine glycosylation occurs at Asn393.

It belongs to the AB hydrolase superfamily. Lipase family. Post-translationally, N-glycosylated. N-glycosylated. N-glycosylation is important for maturation of the enzyme and normal subcellular location. Detected in brain (at protein level).

It is found in the lysosome. The protein resides in the secreted. Its subcellular location is the membrane. It carries out the reaction a 1,2-diacyl-sn-glycero-3-phosphocholine + H2O = a 2-acyl-sn-glycero-3-phosphocholine + a fatty acid + H(+). The enzyme catalyses 1-hexadecanoyl-2-(9Z-octadecenoyl)-sn-glycero-3-phosphocholine + H2O = 2-(9Z-octadecenoyl)-sn-glycero-3-phosphocholine + hexadecanoate + H(+). It catalyses the reaction 1,2-di-(9Z-octadecenoyl)-sn-glycero-3-phosphocholine + H2O = 2-(9Z-octadecenoyl)-sn-glycero-3-phosphocholine + (9Z)-octadecenoate + H(+). The catalysed reaction is 1-hexadecanoyl-2-glutaroyl-sn-glycero-3-phosphocholine + H2O = 2-glutaroyl-sn-glycero-3-phosphocholine + hexadecanoate + H(+). It carries out the reaction 1-hexadecanoyl-2-nonadioyl-sn-glycero-3-phosphocholine + H2O = 2-nonadioyl-sn-glycero-3-phosphocholine + hexadecanoate + H(+). The enzyme catalyses 1-hexadecanoyl-2-(5-oxopentanoyl)-sn-glycero-3-phosphocholine + H2O = 2-(5-oxopentanoyl)-sn-glycero-3-phosphocholine + hexadecanoate + H(+). It catalyses the reaction 1-hexadecanoyl-2-(9-oxononanoyl)-sn-glycero-3-phosphocholine + H2O = 2-(9-oxononanoyl)-sn-glycero-3-phosphocholine + hexadecanoate + H(+). The catalysed reaction is 1,2-dihexadecanoyl-sn-glycero-3-phosphocholine + H2O = 2-hexadecanoyl-sn-glycero-3-phosphocholine + hexadecanoate + H(+). It carries out the reaction a 1,2-diacyl-sn-glycero-3-phosphocholine + H2O = a 1-acyl-sn-glycero-3-phosphocholine + a fatty acid + H(+). The enzyme catalyses 1-hexadecanoyl-2-(9Z-octadecenoyl)-sn-glycero-3-phosphocholine + H2O = 1-hexadecanoyl-sn-glycero-3-phosphocholine + (9Z)-octadecenoate + H(+). It catalyses the reaction 1,2-di-(9Z-octadecenoyl)-sn-glycero-3-phosphocholine + H2O = 1-(9Z-octadecenoyl)-sn-glycero-3-phosphocholine + (9Z)-octadecenoate + H(+). The catalysed reaction is 1,2-dihexadecanoyl-sn-glycero-3-phosphocholine + H2O = 1-hexadecanoyl-sn-glycero-3-phosphocholine + hexadecanoate + H(+). It carries out the reaction a 1-acyl-sn-glycero-3-phosphocholine + H2O = sn-glycerol 3-phosphocholine + a fatty acid + H(+). The enzyme catalyses 1-hexadecanoyl-sn-glycero-3-phosphocholine + H2O = sn-glycerol 3-phosphocholine + hexadecanoate + H(+). It catalyses the reaction N-(acetyl)-sphing-4-enine + a 1,2-diacyl-sn-glycero-3-phosphoethanolamine = 1-O-acyl-N-(acetyl)-sphing-4-enine + a 2-acyl-sn-glycero-3-phosphoethanolamine. The catalysed reaction is 1-hexadecanoyl-2-(9Z-octadecenoyl)-sn-glycero-3-phosphoethanolamine + N-(acetyl)-sphing-4-enine = 2-(9Z-octadecenoyl)-sn-glycero-3-phosphoethanolamine + 1-hexadecanoyl-N-(acetyl)-sphing-4-enine. It carries out the reaction 1-hexadecanoyl-2-(9Z,12Z-octadecadienoyl)-sn-glycero-3-phosphoethanolamine + N-(acetyl)-sphing-4-enine = 2-(9Z,12Z)-octadecadienoyl-sn-glycero-3-phosphoethanolamine + 1-hexadecanoyl-N-(acetyl)-sphing-4-enine. The enzyme catalyses 1-hexadecanoyl-2-(5Z,8Z,11Z,14Z-eicosatetraenoyl)-sn-glycero-3-phosphoethanolamine + N-(acetyl)-sphing-4-enine = 2-(5Z,8Z,11Z,14Z)-eicosatetraenoyl-sn-glycero-3-phosphoethanolamine + 1-hexadecanoyl-N-(acetyl)-sphing-4-enine. It catalyses the reaction N-(acetyl)-sphing-4-enine + a 1,2-diacyl-sn-glycero-3-phosphoethanolamine = 1-O-acyl-N-(acetyl)-sphing-4-enine + a 1-acyl-sn-glycero-3-phosphoethanolamine. The catalysed reaction is 1-hexadecanoyl-2-(9Z-octadecenoyl)-sn-glycero-3-phosphoethanolamine + N-(acetyl)-sphing-4-enine = 1-(9Z-octadecenoyl)-N-(acetyl)-sphing-4-enine + 1-hexadecanoyl-sn-glycero-3-phosphoethanolamine. It carries out the reaction 1-hexadecanoyl-2-(9Z,12Z-octadecadienoyl)-sn-glycero-3-phosphoethanolamine + N-(acetyl)-sphing-4-enine = 1-(9Z,12Z-octadecadienoyl)-N-acetylsphing-4-enine + 1-hexadecanoyl-sn-glycero-3-phosphoethanolamine. The enzyme catalyses 1-hexadecanoyl-2-(5Z,8Z,11Z,14Z-eicosatetraenoyl)-sn-glycero-3-phosphoethanolamine + N-(acetyl)-sphing-4-enine = 1-(5Z,8Z,11Z,14Z)-eicosatetraenoyl-N-(acetyl)-sphing-4-enine + 1-hexadecanoyl-sn-glycero-3-phosphoethanolamine. It catalyses the reaction N-(acetyl)-sphing-4-enine + a 1,2-diacyl-sn-glycero-3-phosphocholine = 1-O-acyl-N-(acetyl)-sphing-4-enine + a 2-acyl-sn-glycero-3-phosphocholine. The catalysed reaction is 1-hexadecanoyl-2-(9Z-octadecenoyl)-sn-glycero-3-phosphocholine + N-(acetyl)-sphing-4-enine = 1-hexadecanoyl-N-(acetyl)-sphing-4-enine + 2-(9Z-octadecenoyl)-sn-glycero-3-phosphocholine. It carries out the reaction 1-hexadecanoyl-2-(9Z,12Z-octadecadienoyl)-sn-glycero-3-phosphocholine + N-(acetyl)-sphing-4-enine = 2-(9Z,12Z-octadecadienoyl)-sn-glycero-3-phosphocholine + 1-hexadecanoyl-N-(acetyl)-sphing-4-enine. The enzyme catalyses 1-hexadecanoyl-2-(5Z,8Z,11Z,14Z-eicosatetraenoyl)-sn-glycero-3-phosphocholine + N-(acetyl)-sphing-4-enine = 1-hexadecanoyl-N-(acetyl)-sphing-4-enine + 2-(5Z,8Z,11Z,14Z)-eicosatetraenoyl-sn-glycero-3-phosphocholine. It catalyses the reaction 1-hexadecanoyl-2-(4Z,7Z,10Z,13Z,16Z,19Z-docosahexaenoyl)-sn-glycero-3-phosphocholine + N-(acetyl)-sphing-4-enine = 2-(4Z,7Z,10Z,13Z,16Z,19Z-docosahexaenoyl)-sn-glycero-3-phosphocholine + 1-hexadecanoyl-N-(acetyl)-sphing-4-enine. The catalysed reaction is 1-hexadecanoyl-2-nonadioyl-sn-glycero-3-phosphocholine + N-(acetyl)-sphing-4-enine = 2-nonadioyl-sn-glycero-3-phosphocholine + 1-hexadecanoyl-N-(acetyl)-sphing-4-enine. It carries out the reaction 1-octadecanoyl-2-(9Z-octadecenoyl)-sn-glycero-3-phosphocholine + N-(acetyl)-sphing-4-enine = 1-octadecanoyl-N-(acetyl)-sphing-4-enine + 2-(9Z-octadecenoyl)-sn-glycero-3-phosphocholine. The enzyme catalyses 1-(9Z)-octadecenoyl-2-octadecanoyl-sn-glycero-3-phosphocholine + N-(acetyl)-sphing-4-enine = 2-octadecanoyl-sn-glycero-3-phosphocholine + 1-(9Z-octadecenoyl)-N-(acetyl)-sphing-4-enine. It catalyses the reaction 1-octadecanoyl-2-(5Z,8Z,11Z,14Z-eicosatetraenoyl)-sn-glycero-3-phosphocholine + N-(acetyl)-sphing-4-enine = 1-octadecanoyl-N-(acetyl)-sphing-4-enine + 2-(5Z,8Z,11Z,14Z)-eicosatetraenoyl-sn-glycero-3-phosphocholine. The catalysed reaction is 1-(9Z-octadecenoyl)-2-hexadecanoyl-sn-glycero-3-phosphocholine + N-(acetyl)-sphing-4-enine = 1-(9Z-octadecenoyl)-N-(acetyl)-sphing-4-enine + 2-hexadecanoyl-sn-glycero-3-phosphocholine. It carries out the reaction N-(acetyl)-sphing-4-enine + a 1,2-diacyl-sn-glycero-3-phosphocholine = 1-O-acyl-N-(acetyl)-sphing-4-enine + a 1-acyl-sn-glycero-3-phosphocholine. The enzyme catalyses 1-hexadecanoyl-2-(9Z-octadecenoyl)-sn-glycero-3-phosphocholine + N-(acetyl)-sphing-4-enine = 1-(9Z-octadecenoyl)-N-(acetyl)-sphing-4-enine + 1-hexadecanoyl-sn-glycero-3-phosphocholine. It catalyses the reaction 1-hexadecanoyl-2-(9Z,12Z-octadecadienoyl)-sn-glycero-3-phosphocholine + N-(acetyl)-sphing-4-enine = 1-(9Z,12Z-octadecadienoyl)-N-acetylsphing-4-enine + 1-hexadecanoyl-sn-glycero-3-phosphocholine. The catalysed reaction is 1-hexadecanoyl-2-(5Z,8Z,11Z,14Z-eicosatetraenoyl)-sn-glycero-3-phosphocholine + N-(acetyl)-sphing-4-enine = 1-(5Z,8Z,11Z,14Z)-eicosatetraenoyl-N-(acetyl)-sphing-4-enine + 1-hexadecanoyl-sn-glycero-3-phosphocholine. It carries out the reaction 1-hexadecanoyl-2-(4Z,7Z,10Z,13Z,16Z,19Z-docosahexaenoyl)-sn-glycero-3-phosphocholine + N-(acetyl)-sphing-4-enine = 1-(4Z,7Z,10Z,13Z,16Z,19Z-docosahexaenoyl)-N-(acetyl)-sphing-4-enine + 1-hexadecanoyl-sn-glycero-3-phosphocholine. The enzyme catalyses 1-octadecanoyl-2-(9Z-octadecenoyl)-sn-glycero-3-phosphocholine + N-(acetyl)-sphing-4-enine = 1-(9Z-octadecenoyl)-N-(acetyl)-sphing-4-enine + 1-octadecanoyl-sn-glycero-3-phosphocholine. It catalyses the reaction 1-octadecanoyl-2-(9Z,12Z)-octadecadienoyl-sn-glycero-3-phosphocholine + N-(acetyl)-sphing-4-enine = 1-(9Z,12Z-octadecadienoyl)-N-acetylsphing-4-enine + 1-octadecanoyl-sn-glycero-3-phosphocholine. The catalysed reaction is 1-(9Z-octadecenoyl)-2-hexadecanoyl-sn-glycero-3-phosphocholine + N-(acetyl)-sphing-4-enine = 1-hexadecanoyl-N-(acetyl)-sphing-4-enine + 1-(9Z-octadecenoyl)-sn-glycero-3-phosphocholine. It carries out the reaction 1-(9Z)-octadecenoyl-2-octadecanoyl-sn-glycero-3-phosphocholine + N-(acetyl)-sphing-4-enine = 1-octadecanoyl-N-(acetyl)-sphing-4-enine + 1-(9Z-octadecenoyl)-sn-glycero-3-phosphocholine. The enzyme catalyses 1,2-di-(9Z-octadecenoyl)-sn-glycero-3-phosphocholine + N-(acetyl)-sphing-4-enine = 1-(9Z-octadecenoyl)-N-(acetyl)-sphing-4-enine + 1-(9Z-octadecenoyl)-sn-glycero-3-phosphocholine. It catalyses the reaction 1-octadecanoyl-2-(5Z,8Z,11Z,14Z-eicosatetraenoyl)-sn-glycero-3-phosphocholine + N-(acetyl)-sphing-4-enine = 1-(5Z,8Z,11Z,14Z)-eicosatetraenoyl-N-(acetyl)-sphing-4-enine + 1-octadecanoyl-sn-glycero-3-phosphocholine. The catalysed reaction is a 1,2-diacyl-sn-glycero-3-phospho-L-serine + N-(acetyl)-sphing-4-enine = a 2-acyl-sn-glycero-3-phospho-L-serine + 1-O-acyl-N-(acetyl)-sphing-4-enine. It carries out the reaction 1-octadecanoyl-2-(9Z-octadecenoyl)-sn-glycero-3-phospho-L-serine + N-(acetyl)-sphing-4-enine = 2-(9Z-octadecenoyl)-sn-glycero-3-phospho-L-serine + 1-octadecanoyl-N-(acetyl)-sphing-4-enine. The enzyme catalyses a 1,2-diacyl-sn-glycero-3-phospho-L-serine + N-(acetyl)-sphing-4-enine = 1-O-acyl-N-(acetyl)-sphing-4-enine + a 1-acyl-sn-glycero-3-phospho-L-serine. It catalyses the reaction 1-octadecanoyl-2-(9Z-octadecenoyl)-sn-glycero-3-phospho-L-serine + N-(acetyl)-sphing-4-enine = 1-octadecanoyl-sn-glycero-3-phosphoserine + 1-(9Z-octadecenoyl)-N-(acetyl)-sphing-4-enine. The catalysed reaction is a 1,2-diacyl-sn-glycero-3-phospho-(1'-sn-glycerol) + N-(acetyl)-sphing-4-enine = 2-acyl-sn-glycero-3-phospho-(1'-sn-glycerol) + 1-O-acyl-N-(acetyl)-sphing-4-enine. It carries out the reaction 1-octadecanoyl-2-(9Z-octadecenoyl)-sn-glycero-3-phospho-(1'-sn-glycerol) + N-(acetyl)-sphing-4-enine = 2-(9Z-octadecenoyl)-sn-glycero-3-phospho-(1'-sn-glycerol) + 1-octadecanoyl-N-(acetyl)-sphing-4-enine. The enzyme catalyses a 1,2-diacyl-sn-glycero-3-phospho-(1'-sn-glycerol) + N-(acetyl)-sphing-4-enine = 1-O-acyl-N-(acetyl)-sphing-4-enine + 1-acyl-sn-glycero-3-phospho-(1'-sn-glycerol). It catalyses the reaction 1-octadecanoyl-2-(9Z-octadecenoyl)-sn-glycero-3-phospho-(1'-sn-glycerol) + N-(acetyl)-sphing-4-enine = 1-octadecanoyl-sn-glycero-3-phospho-(1'-sn-glycerol) + 1-(9Z-octadecenoyl)-N-(acetyl)-sphing-4-enine. The catalysed reaction is an N-acylethanolamine + a 1,2-diacyl-sn-glycero-3-phosphocholine = 2-(acylamino)ethyl fatty acid + a 2-acyl-sn-glycero-3-phosphocholine. It carries out the reaction an N-acylethanolamine + a 1,2-diacyl-sn-glycero-3-phosphocholine = 2-(acylamino)ethyl fatty acid + a 1-acyl-sn-glycero-3-phosphocholine. The enzyme catalyses N-(5Z,8Z,11Z,14Z-eicosatetraenoyl)-ethanolamine + 1,2-di-(9Z-octadecenoyl)-sn-glycero-3-phosphocholine = 2-[(5Z,8Z,11Z,14Z)-eicosatetraenoylamino]ethyl (9Z)-octadecenoate + (9Z-octadecenoyl)-sn-glycero-3-phosphocholine. It catalyses the reaction N-(9Z-octadecenoyl) ethanolamine + 1,2-di-(9Z-octadecenoyl)-sn-glycero-3-phosphocholine = 2-[(9Z)-octadecenoylamino]ethyl (9Z)-octadecenoate + (9Z-octadecenoyl)-sn-glycero-3-phosphocholine. The catalysed reaction is a 3-acyl-sn-glycerol + a 1,2-diacyl-sn-glycero-3-phosphocholine = a 1,3-diacylglycerol + a 1-acyl-sn-glycero-3-phosphocholine. It carries out the reaction a 3-acyl-sn-glycerol + a 1,2-diacyl-sn-glycero-3-phosphocholine = a 1,3-diacylglycerol + a 2-acyl-sn-glycero-3-phosphocholine. The enzyme catalyses 3-(9Z-octadecenoyl)-sn-glycerol + 1,2-di-(9Z-octadecenoyl)-sn-glycero-3-phosphocholine = 1,3-di-(9Z-octadecenoyl)-glycerol + (9Z-octadecenoyl)-sn-glycero-3-phosphocholine. It catalyses the reaction 3-hexadecanoyl-sn-glycerol + 1,2-di-(9Z-octadecenoyl)-sn-glycero-3-phosphocholine = 1-(9Z)-octadecenoyl-3-hexadecanoyl-sn-glycerol + (9Z-octadecenoyl)-sn-glycero-3-phosphocholine. The catalysed reaction is a 1-acyl-sn-glycerol + a 1,2-diacyl-sn-glycero-3-phosphocholine = a 1,3-diacylglycerol + a 2-acyl-sn-glycero-3-phosphocholine. It carries out the reaction a 1-acyl-sn-glycerol + a 1,2-diacyl-sn-glycero-3-phosphocholine = a 1,3-diacylglycerol + a 1-acyl-sn-glycero-3-phosphocholine. The enzyme catalyses 1-(9Z-octadecenoyl)-sn-glycerol + 1,2-di-(9Z-octadecenoyl)-sn-glycero-3-phosphocholine = 1,3-di-(9Z-octadecenoyl)-glycerol + (9Z-octadecenoyl)-sn-glycero-3-phosphocholine. It catalyses the reaction 1-hexadecanoyl-sn-glycerol + 1,2-di-(9Z-octadecenoyl)-sn-glycero-3-phosphocholine = 1-hexadecanoyl-3-(9Z)-octadecenoyl-sn-glycerol + (9Z-octadecenoyl)-sn-glycero-3-phosphocholine. The catalysed reaction is a 2-acylglycerol + a 1,2-diacyl-sn-glycero-3-phosphocholine = a 1,2-diacylglycerol + a 2-acyl-sn-glycero-3-phosphocholine. It carries out the reaction a 2-acylglycerol + a 1,2-diacyl-sn-glycero-3-phosphocholine = a 1,2-diacylglycerol + a 1-acyl-sn-glycero-3-phosphocholine. The enzyme catalyses 2-hexadecanoylglycerol + 1,2-di-(9Z-octadecenoyl)-sn-glycero-3-phosphocholine = 1-(9Z)-octadecenoyl-2-hexadecanoylglycerol + (9Z-octadecenoyl)-sn-glycero-3-phosphocholine. It catalyses the reaction 1-O-alkylglycerol + a 1,2-diacyl-sn-glycero-3-phosphocholine = 1-O-alkyl-3-acylglycerol + a 1-acyl-sn-glycero-3-phosphocholine. The catalysed reaction is 1-O-alkylglycerol + a 1,2-diacyl-sn-glycero-3-phosphocholine = 1-O-alkyl-3-acylglycerol + a 2-acyl-sn-glycero-3-phosphocholine. It carries out the reaction 1-O-hexadecylglycerol + 1,2-di-(9Z-octadecenoyl)-sn-glycero-3-phosphocholine = 1-O-hexadecyl-3-(9Z)-octadecenoylglycerol + (9Z-octadecenoyl)-sn-glycero-3-phosphocholine. The enzyme catalyses 1-O-alkyl-2-acyl-sn-glycerol + a 1,2-diacyl-sn-glycero-3-phosphocholine = 1-O-alkyl-2,3-diacyl-sn-glycerol + a 2-acyl-sn-glycero-3-phosphocholine. It catalyses the reaction 1-O-alkyl-2-acyl-sn-glycerol + a 1,2-diacyl-sn-glycero-3-phosphocholine = 1-O-alkyl-2,3-diacyl-sn-glycerol + a 1-acyl-sn-glycero-3-phosphocholine. The catalysed reaction is 1-O-hexadecyl-2-acetyl-sn-glycerol + 1,2-di-(9Z-octadecenoyl)-sn-glycero-3-phosphocholine = 1-O-hexadecyl-2-acetyl-3-(9Z)-octadecenoyl-sn-glycerol + (9Z-octadecenoyl)-sn-glycero-3-phosphocholine. It carries out the reaction 1-O-hexadecyl-2-O-methyl-sn-glycerol + 1,2-di-(9Z-octadecenoyl)-sn-glycero-3-phosphocholine = 1-O-hexadecyl-2-O-methyl-3-(9Z)-octadecenoyl-sn-glycerol + (9Z-octadecenoyl)-sn-glycero-3-phosphocholine. The enzyme catalyses a 1,2-diacyl-sn-glycero-3-phosphoethanolamine + H2O = a 1-acyl-sn-glycero-3-phosphoethanolamine + a fatty acid + H(+). It catalyses the reaction 1-acyl-2-(5Z,8Z,11Z,14Z)-eicosatetraenoyl-sn-glycero-3-phosphoethanolamine + H2O = a 1-acyl-sn-glycero-3-phosphoethanolamine + (5Z,8Z,11Z,14Z)-eicosatetraenoate + H(+). The catalysed reaction is a 1,2-diacyl-sn-glycero-3-phospho-(1'-sn-glycerol) + H2O = 1-acyl-sn-glycero-3-phospho-(1'-sn-glycerol) + a fatty acid + H(+). It carries out the reaction 1-hexadecanoyl-2-(9Z-octadecenoyl)-sn-glycero-3-phospho-(1'-sn-glycerol) + H2O = 1-hexadecanoyl-sn-glycero-3-phospho-(1'-sn-glycerol) + (9Z)-octadecenoate + H(+). The enzyme catalyses a 1,2-diacyl-sn-glycero-3-phospho-(1'-sn-glycerol) + H2O = 2-acyl-sn-glycero-3-phospho-(1'-sn-glycerol) + a fatty acid + H(+). It catalyses the reaction 1-hexadecanoyl-2-(9Z-octadecenoyl)-sn-glycero-3-phospho-(1'-sn-glycerol) + H2O = 2-(9Z-octadecenoyl)-sn-glycero-3-phospho-(1'-sn-glycerol) + hexadecanoate + H(+). Transacylase activity is completely inhibited by Triton X-100 and partially inhibited by heparin. Moderately activated by Mg(2+) and Ca(2+). Functionally, has dual calcium-independent phospholipase and O-acyltransferase activities with a potential role in glycerophospholipid homeostasis and remodeling of acyl groups of lipophilic alcohols present in acidic cellular compartments. Catalyzes hydrolysis of the ester bond of the fatty acyl group attached at sn-1 or sn-2 position of phospholipids (phospholipase A1 or A2 activity) and transfer it to the hydroxyl group at the first carbon of lipophilic alcohols (O-acyltransferase activity). Among preferred fatty acyl donors are phosphatidylcholines, phosphatidylethanolamines, phosphatidylglycerols and phosphatidylserines. Favors sn-2 over sn-1 deacylation of unsaturated fatty acyl groups of phosphatidylcholines, phosphatidylethanolamines, and phosphatidylglycerols. Among preferred fatty acyl acceptors are natural lipophilic alcohols including short-chain ceramide N-acetyl-sphingosine (C2 ceramide), alkylacylglycerols, monoacylglycerols, and acylethanolamides such as anandamide and oleoylethanolamide. Selectively hydrolyzes the sn-1 fatty acyl group of truncated oxidized phospholipids and may play a role in detoxification of reactive oxidized phospholipids during oxidative stress. Required for normal phospholipid degradation in alveolar macrophages with potential implications in the clearance of pulmonary surfactant, which is mainly composed of dipalmitoylphosphatidylcholine (1,2-dihexadecanoyl-sn-glycero-3-phosphocholine). Involved in the first step of bis(monoacylglycero)phosphate (BMP) de novo synthesis from phosphatidylglycerol (1,2-diacyl-sn-glycero-3-phospho-(1'-sn-glycerol), PG). BMP is an important player in cargo sorting and degradation, regulation of cellular cholesterol levels and intercellular communication. At neutral pH, hydrolyzes the sn-1 fatty acyl group of the lysophosphatidylcholines. This Bos taurus (Bovine) protein is Lysosomal phospholipase A and acyltransferase (PLA2G15).